Here is a 286-residue protein sequence, read N- to C-terminus: Ribosome-inactivating protein beta-momorcharin (286 aa).

Positions 1-23 (MVKCLLLSFLIIAIFIGVPTAKG) are cleaved as a signal peptide. Asn74 carries N-linked (GlcNAc...) asparagine glycosylation. Residues Tyr93, Tyr132, Glu181, and Arg184 contribute to the active site.

The protein belongs to the ribosome-inactivating protein family. Type 1 RIP subfamily. Bound to a branched hexasaccharide.

It catalyses the reaction Endohydrolysis of the N-glycosidic bond at one specific adenosine on the 28S rRNA.. Irreversibly relaxes supercoiled DNA and catalyzes double-stranded breakage. Also acts as a ribosome inactivating protein. In Momordica charantia (Bitter gourd), this protein is Ribosome-inactivating protein beta-momorcharin (MAP30).